Consider the following 343-residue polypeptide: Heat-inducible transcription repressor HrcA (343 aa).

Belongs to the HrcA family.

Negative regulator of class I heat shock genes (grpE-dnaK-dnaJ and groELS operons). Prevents heat-shock induction of these operons. The polypeptide is Heat-inducible transcription repressor HrcA (Halalkalibacterium halodurans (strain ATCC BAA-125 / DSM 18197 / FERM 7344 / JCM 9153 / C-125) (Bacillus halodurans)).